We begin with the raw amino-acid sequence, 503 residues long: Aminoaldehyde dehydrogenase 2, peroxisomal (503 aa).

Na(+) contacts are provided by I28, D99, and L189. 238-245 (GSTMTGSK) lines the NAD(+) pocket. E260 serves as the catalytic Proton acceptor. 2 residues coordinate NAD(+): C294 and E393. The active-site Nucleophile is the C294. Residues 501-503 (SKL) carry the Microbody targeting signal motif.

Belongs to the aldehyde dehydrogenase family. Expressed in leaves, flowers and fruits.

It localises to the peroxisome. The enzyme catalyses 4-aminobutanal + NAD(+) + H2O = 4-aminobutanoate + NADH + 2 H(+). It catalyses the reaction 3-aminopropanal + NAD(+) + H2O = beta-alanine + NADH + 2 H(+). It participates in amine and polyamine biosynthesis; betaine biosynthesis via choline pathway; betaine from betaine aldehyde: step 1/1. Its function is as follows. Dehydrogenase that catalyzes the oxidation of several aminoaldehydes. Metabolizes and detoxifies aldehyde products of polyamine degradation to non-toxic amino acids. Catalyzes the oxidation of 4-aminobutanal and 3-aminopropanal to 4-aminobutanoate and beta-alanine, respectively. This is Aminoaldehyde dehydrogenase 2, peroxisomal from Malus domestica (Apple).